Consider the following 360-residue polypeptide: tRNA-specific 2-thiouridylase MnmA (360 aa).

Residues 9 to 16 (AMSGGVDS) and leucine 35 each bind ATP. Cysteine 104 serves as the catalytic Nucleophile. Cysteine 104 and cysteine 197 form a disulfide bridge. Glycine 128 provides a ligand contact to ATP. The interval 147 to 149 (KDQ) is interaction with tRNA. The Cysteine persulfide intermediate role is filled by cysteine 197.

The protein belongs to the MnmA/TRMU family.

It is found in the cytoplasm. The catalysed reaction is S-sulfanyl-L-cysteinyl-[protein] + uridine(34) in tRNA + AH2 + ATP = 2-thiouridine(34) in tRNA + L-cysteinyl-[protein] + A + AMP + diphosphate + H(+). Its function is as follows. Catalyzes the 2-thiolation of uridine at the wobble position (U34) of tRNA, leading to the formation of s(2)U34. This is tRNA-specific 2-thiouridylase MnmA from Salinispora arenicola (strain CNS-205).